The following is a 303-amino-acid chain: 1D-myo-inositol 2-acetamido-2-deoxy-alpha-D-glucopyranoside deacetylase (303 aa).

His-13, Asp-16, and His-147 together coordinate Zn(2+).

It belongs to the MshB deacetylase family. The cofactor is Zn(2+).

The enzyme catalyses 1D-myo-inositol 2-acetamido-2-deoxy-alpha-D-glucopyranoside + H2O = 1D-myo-inositol 2-amino-2-deoxy-alpha-D-glucopyranoside + acetate. Its function is as follows. Catalyzes the deacetylation of 1D-myo-inositol 2-acetamido-2-deoxy-alpha-D-glucopyranoside (GlcNAc-Ins) in the mycothiol biosynthesis pathway. The polypeptide is 1D-myo-inositol 2-acetamido-2-deoxy-alpha-D-glucopyranoside deacetylase (Mycobacterium tuberculosis (strain ATCC 25177 / H37Ra)).